Consider the following 403-residue polypeptide: D-mannonate dehydratase CC0532 (403 aa).

The substrate site is built by Asn-38 and His-123. The Proton donor/acceptor role is filled by Tyr-160. Asp-211 is a Mg(2+) binding site. His-213 functions as the Proton donor/acceptor in the catalytic mechanism. The Mg(2+) site is built by Glu-237 and Glu-263. 5 residues coordinate substrate: Glu-263, Arg-284, His-313, Asp-317, and Glu-340.

This sequence belongs to the mandelate racemase/muconate lactonizing enzyme family. GalD subfamily. Mg(2+) is required as a cofactor.

The enzyme catalyses D-mannonate = 2-dehydro-3-deoxy-D-gluconate + H2O. Its pathway is carbohydrate metabolism; pentose and glucuronate interconversion. Its function is as follows. Catalyzes the dehydration of D-mannonate. Has no detectable activity with a panel of 70 other acid sugars (in vitro). The polypeptide is D-mannonate dehydratase CC0532 (Caulobacter vibrioides (strain ATCC 19089 / CIP 103742 / CB 15) (Caulobacter crescentus)).